The chain runs to 544 residues: Protein adenylyltransferase (544 aa).

Positions 63–216 (FDTAYLCHIH…LEPMQHLFED (154 aa)) constitute a Fido domain. ATP-binding positions include 93–94 (FA), 106–107 (RT), 163–167 (EGNGR), and Arg-170.

Its subcellular location is the secreted. The enzyme catalyses L-tyrosyl-[protein] + ATP = O-(5'-adenylyl)-L-tyrosyl-[protein] + diphosphate. The catalysed reaction is L-threonyl-[protein] + ATP = 3-O-(5'-adenylyl)-L-threonyl-[protein] + diphosphate. Adenylyltransferase involved in virulence by mediating the addition of adenosine 5'-monophosphate (AMP) to specific residue of host target proteins. The polypeptide is Protein adenylyltransferase (bepA) (Bartonella henselae (strain ATCC 49882 / DSM 28221 / CCUG 30454 / Houston 1) (Rochalimaea henselae)).